The primary structure comprises 206 residues: Regulator of rDNA transcription 14 (206 aa).

A disordered region spans residues 178–206 (FVKDHRYPGLTPGLAPVGLSDEEDSSEED). A phosphoserine mark is found at Ser-197, Ser-202, and Ser-203. Residues 197 to 206 (SDEEDSSEED) are compositionally biased toward acidic residues.

It belongs to the RRT14 family.

Its subcellular location is the nucleus. The protein localises to the nucleolus. Involved in ribosome biogenesis, probably through modulation of rDNA transcription. The sequence is that of Regulator of rDNA transcription 14 (RRT14) from Saccharomyces cerevisiae (strain AWRI1631) (Baker's yeast).